Consider the following 117-residue polypeptide: Ribonuclease P protein component (117 aa).

This sequence belongs to the RnpA family. Consists of a catalytic RNA component (M1 or rnpB) and a protein subunit.

It catalyses the reaction Endonucleolytic cleavage of RNA, removing 5'-extranucleotides from tRNA precursor.. RNaseP catalyzes the removal of the 5'-leader sequence from pre-tRNA to produce the mature 5'-terminus. It can also cleave other RNA substrates such as 4.5S RNA. The protein component plays an auxiliary but essential role in vivo by binding to the 5'-leader sequence and broadening the substrate specificity of the ribozyme. The sequence is that of Ribonuclease P protein component from Thermotoga petrophila (strain ATCC BAA-488 / DSM 13995 / JCM 10881 / RKU-1).